Here is a 410-residue protein sequence, read N- to C-terminus: Translation initiation factor 2 subunit gamma (410 aa).

A tr-type G domain is found at 6-203 (QSEVNIGMVG…AIQEFIPTPE (198 aa)). A G1 region spans residues 15–22 (GHVDHGKT). Mg(2+) is bound by residues Asp-18, Thr-22, Gly-43, and Ser-45. Position 18–23 (18–23 (DHGKTS)) interacts with GTP. The G2 stretch occupies residues 43–47 (GISIR). Positions 58, 61, 73, and 76 each coordinate Zn(2+). The tract at residues 90–93 (DAPG) is G3. GTP is bound by residues 146 to 149 (NKID) and 181 to 183 (SAH). Residues 146-149 (NKID) are G4. The segment at 181–183 (SAH) is G5.

Belongs to the TRAFAC class translation factor GTPase superfamily. Classic translation factor GTPase family. EIF2G subfamily. As to quaternary structure, heterotrimer composed of an alpha, a beta and a gamma chain. Mg(2+) serves as cofactor.

It catalyses the reaction GTP + H2O = GDP + phosphate + H(+). EIF-2 functions in the early steps of protein synthesis by forming a ternary complex with GTP and initiator tRNA. In Methanococcus maripaludis (strain C7 / ATCC BAA-1331), this protein is Translation initiation factor 2 subunit gamma.